The primary structure comprises 112 residues: MALQDVVTREYTINLHKRLHGVNFKKRAPKAVKEIKKFATLHMGTTDVRLDPKLNIAIWKRGVQGVENRMRLRISRKRNDEEDAKEKLFAYVEPVIVPSTKGLQTVVVEDDE.

Belongs to the eukaryotic ribosomal protein eL31 family. In terms of assembly, component of the large ribosomal subunit. Mature ribosomes consist of a small (40S) and a large (60S) subunit. The 40S subunit contains about 32 different proteins and 1 molecule of RNA (18S). The 60S subunit contains 45 different proteins and 3 molecules of RNA (25S, 5.8S and 5S).

Its subcellular location is the cytoplasm. In terms of biological role, component of the ribosome, a large ribonucleoprotein complex responsible for the synthesis of proteins in the cell. The small ribosomal subunit (SSU) binds messenger RNAs (mRNAs) and translates the encoded message by selecting cognate aminoacyl-transfer RNA (tRNA) molecules. The large subunit (LSU) contains the ribosomal catalytic site termed the peptidyl transferase center (PTC), which catalyzes the formation of peptide bonds, thereby polymerizing the amino acids delivered by tRNAs into a polypeptide chain. The nascent polypeptides leave the ribosome through a tunnel in the LSU and interact with protein factors that function in enzymatic processing, targeting, and the membrane insertion of nascent chains at the exit of the ribosomal tunnel. This Candida albicans (strain SC5314 / ATCC MYA-2876) (Yeast) protein is Large ribosomal subunit protein eL31.